A 578-amino-acid polypeptide reads, in one-letter code: Octopamine receptor 2 (578 aa).

The Extracellular portion of the chain corresponds to 1–84; sequence MMSFPIALFA…YDSITIFITV (84 aa). N-linked (GlcNAc...) asparagine glycans are attached at residues Asn13, Asn38, Asn46, and Asn59. Residues 85 to 107 form a helical membrane-spanning segment; that stretch reads AVVLTLITLWTILGNFFVLMALY. Residues 108-117 are Cytoplasmic-facing; sequence RYGTLRTMSN. Residues 118–139 traverse the membrane as a helical segment; that stretch reads CLIGNLAISDLLLAVTVLPIST. The Extracellular portion of the chain corresponds to 140 to 156; it reads VHDLLGYWVFGEFTCTL. Cys154 and Cys239 are disulfide-bonded. The helical transmembrane segment at 157 to 177 threads the bilayer; that stretch reads WLCMDVLYCTASIWGLCTVAF. The Cytoplasmic segment spans residues 178–197; that stretch reads DRYLATVYPVWYHDQRSVRK. A helical membrane pass occupies residues 198 to 220; that stretch reads AVGCIVFVWIFSIVISFAPFIGW. The Extracellular portion of the chain corresponds to 221–251; sequence QHMIPSFFSFNASIQRYQCILFTSSSYVLYS. Asn231 carries an N-linked (GlcNAc...) asparagine glycan. The chain crosses the membrane as a helical span at residues 252 to 272; that stretch reads SMGSFVIPAILMAFMYVRIFV. Residues 273–495 are Cytoplasmic-facing; that stretch reads VLHNQSRGVK…ELREQRATKR (223 aa). Residues 496-517 traverse the membrane as a helical segment; sequence MLLIMACFCVCWMPFLFMYILR. Topologically, residues 518–531 are extracellular; that stretch reads SVCDTCHMNQHFVA. A helical membrane pass occupies residues 532 to 553; the sequence is AIIWLGYVNSSLNPVLYTLFND. Residues 554–578 are Cytoplasmic-facing; sequence DFKVAFKRLIGARSPSAYRSPGPRR.

It belongs to the G-protein coupled receptor 1 family.

Its subcellular location is the cell membrane. In terms of biological role, receptor for octopamine. Octopamine (OA) is a neurotransmitter, neurohormone, and neuromodulator in invertebrates. This receptor induces a long lasting opening of voltage- independent chloride channels, a process which seems to involve protein phosphorylation but does not require either cAPK or PKC. The rank order of potency for agonists is p-synephrine &gt; p-octopamine &gt; xylometazoline &gt; B-HT920 &gt; norepinephrine = clonidine &gt; epinephrine &gt; p-tyramine &gt; phenylephrine = oxymetazoline = mehoxamine = dopamine &gt; serotonin &gt; histamine. For antagonists, the rank order is rauwolscine = mianserin &gt; phentolamine &gt; chlorpromazine &gt; spiperone &gt; yohimbine &gt; propanolol &gt; alprenolol &gt; prazosine &gt; pindolol. This Lymnaea stagnalis (Great pond snail) protein is Octopamine receptor 2.